The following is a 339-amino-acid chain: Uroporphyrinogen decarboxylase (339 aa).

Residues 23–27, D72, Y147, T202, and H315 each bind substrate; that span reads RQAGR.

Belongs to the uroporphyrinogen decarboxylase family. As to quaternary structure, homodimer.

It localises to the cytoplasm. The enzyme catalyses uroporphyrinogen III + 4 H(+) = coproporphyrinogen III + 4 CO2. It participates in porphyrin-containing compound metabolism; protoporphyrin-IX biosynthesis; coproporphyrinogen-III from 5-aminolevulinate: step 4/4. Its function is as follows. Catalyzes the decarboxylation of four acetate groups of uroporphyrinogen-III to yield coproporphyrinogen-III. This chain is Uroporphyrinogen decarboxylase, found in Citrifermentans bemidjiense (strain ATCC BAA-1014 / DSM 16622 / JCM 12645 / Bem) (Geobacter bemidjiensis).